The chain runs to 360 residues: Acetylxylan esterase / glucomannan deacetylase (360 aa).

An N-terminal signal peptide occupies residues 1–21 (MKPHALIGLLAGMLLSSSLYA). Ser-151 acts as the Nucleophile in catalysis.

Belongs to the carbohydrate esterase 2 (CE2) family.

The protein resides in the secreted. The enzyme catalyses Deacetylation of xylans and xylo-oligosaccharides.. Its pathway is glycan degradation; xylan degradation. Its function is as follows. Involved in the degradation of plant cell wall polysaccharides. Catalyzes the deacetylation of acetylated birchwood xylan and glucomannan, with a large preference for the latter, and of the synthetic substrate 4-nitrophenyl acetate (4-NPAc). The protein is Acetylxylan esterase / glucomannan deacetylase of Cellvibrio japonicus (strain Ueda107) (Pseudomonas fluorescens subsp. cellulosa).